Reading from the N-terminus, the 448-residue chain is Bifunctional protein GlmU (448 aa).

The segment at 1-232 (MSERSLLVVV…VDEVAGVNSR (232 aa)) is pyrophosphorylase. UDP-N-acetyl-alpha-D-glucosamine is bound by residues 11–14 (LAAG), Lys-25, Gln-78, and 83–84 (GT). Mg(2+) is bound at residue Asp-108. The UDP-N-acetyl-alpha-D-glucosamine site is built by Gly-144, Glu-158, Asn-173, and Asn-230. Mg(2+) is bound at residue Asn-230. The tract at residues 233 to 253 (LQLAEAEAILQGRLRRAAMAG) is linker. Positions 254-448 (GATLVAPETV…LRAARGKPKV (195 aa)) are N-acetyltransferase. Residues Arg-319 and Lys-337 each contribute to the UDP-N-acetyl-alpha-D-glucosamine site. The Proton acceptor role is filled by His-349. UDP-N-acetyl-alpha-D-glucosamine-binding residues include Tyr-352 and Asn-363. Acetyl-CoA is bound by residues Ala-366, 372 to 373 (NY), Ser-409, and Arg-426.

In the N-terminal section; belongs to the N-acetylglucosamine-1-phosphate uridyltransferase family. The protein in the C-terminal section; belongs to the transferase hexapeptide repeat family. As to quaternary structure, homotrimer. The cofactor is Mg(2+).

Its subcellular location is the cytoplasm. It carries out the reaction alpha-D-glucosamine 1-phosphate + acetyl-CoA = N-acetyl-alpha-D-glucosamine 1-phosphate + CoA + H(+). The catalysed reaction is N-acetyl-alpha-D-glucosamine 1-phosphate + UTP + H(+) = UDP-N-acetyl-alpha-D-glucosamine + diphosphate. Its pathway is nucleotide-sugar biosynthesis; UDP-N-acetyl-alpha-D-glucosamine biosynthesis; N-acetyl-alpha-D-glucosamine 1-phosphate from alpha-D-glucosamine 6-phosphate (route II): step 2/2. It functions in the pathway nucleotide-sugar biosynthesis; UDP-N-acetyl-alpha-D-glucosamine biosynthesis; UDP-N-acetyl-alpha-D-glucosamine from N-acetyl-alpha-D-glucosamine 1-phosphate: step 1/1. It participates in bacterial outer membrane biogenesis; LPS lipid A biosynthesis. In terms of biological role, catalyzes the last two sequential reactions in the de novo biosynthetic pathway for UDP-N-acetylglucosamine (UDP-GlcNAc). The C-terminal domain catalyzes the transfer of acetyl group from acetyl coenzyme A to glucosamine-1-phosphate (GlcN-1-P) to produce N-acetylglucosamine-1-phosphate (GlcNAc-1-P), which is converted into UDP-GlcNAc by the transfer of uridine 5-monophosphate (from uridine 5-triphosphate), a reaction catalyzed by the N-terminal domain. The polypeptide is Bifunctional protein GlmU (Azorhizobium caulinodans (strain ATCC 43989 / DSM 5975 / JCM 20966 / LMG 6465 / NBRC 14845 / NCIMB 13405 / ORS 571)).